The chain runs to 196 residues: Pyridoxal 5'-phosphate synthase subunit PdxT (196 aa).

Residue 47–49 coordinates L-glutamine; the sequence is GES. Cys79 acts as the Nucleophile in catalysis. L-glutamine is bound by residues Arg106 and 134-135; that span reads IR. Catalysis depends on charge relay system residues His170 and Glu172.

The protein belongs to the glutaminase PdxT/SNO family. In the presence of PdxS, forms a dodecamer of heterodimers. Only shows activity in the heterodimer.

It carries out the reaction aldehydo-D-ribose 5-phosphate + D-glyceraldehyde 3-phosphate + L-glutamine = pyridoxal 5'-phosphate + L-glutamate + phosphate + 3 H2O + H(+). It catalyses the reaction L-glutamine + H2O = L-glutamate + NH4(+). It participates in cofactor biosynthesis; pyridoxal 5'-phosphate biosynthesis. Its function is as follows. Catalyzes the hydrolysis of glutamine to glutamate and ammonia as part of the biosynthesis of pyridoxal 5'-phosphate. The resulting ammonia molecule is channeled to the active site of PdxS. This is Pyridoxal 5'-phosphate synthase subunit PdxT from Bacillus anthracis (strain A0248).